The primary structure comprises 291 residues: Lipoyl synthase, organellar chromatophore (291 aa).

Residues Cys-33, Cys-38, Cys-44, Cys-59, Cys-63, Cys-66, and Ser-274 each coordinate [4Fe-4S] cluster. The Radical SAM core domain occupies 45–263 (FAGGTATFLI…AIGELEMNFL (219 aa)).

It belongs to the radical SAM superfamily. Lipoyl synthase family. The cofactor is [4Fe-4S] cluster.

It localises to the plastid. Its subcellular location is the organellar chromatophore. It carries out the reaction [[Fe-S] cluster scaffold protein carrying a second [4Fe-4S](2+) cluster] + N(6)-octanoyl-L-lysyl-[protein] + 2 oxidized [2Fe-2S]-[ferredoxin] + 2 S-adenosyl-L-methionine + 4 H(+) = [[Fe-S] cluster scaffold protein] + N(6)-[(R)-dihydrolipoyl]-L-lysyl-[protein] + 4 Fe(3+) + 2 hydrogen sulfide + 2 5'-deoxyadenosine + 2 L-methionine + 2 reduced [2Fe-2S]-[ferredoxin]. Its pathway is protein modification; protein lipoylation via endogenous pathway; protein N(6)-(lipoyl)lysine from octanoyl-[acyl-carrier-protein]: step 2/2. In terms of biological role, catalyzes the radical-mediated insertion of two sulfur atoms into the C-6 and C-8 positions of the octanoyl moiety bound to the lipoyl domains of lipoate-dependent enzymes, thereby converting the octanoylated domains into lipoylated derivatives. In Paulinella chromatophora, this protein is Lipoyl synthase, organellar chromatophore.